The chain runs to 126 residues: Glycine cleavage system H protein (126 aa).

A Lipoyl-binding domain is found at 23 to 104 (TLTVGITDHA…PYDNWLFKIK (82 aa)). An N6-lipoyllysine modification is found at Lys64.

This sequence belongs to the GcvH family. As to quaternary structure, the glycine cleavage system is composed of four proteins: P, T, L and H. It depends on (R)-lipoate as a cofactor.

The glycine cleavage system catalyzes the degradation of glycine. The H protein shuttles the methylamine group of glycine from the P protein to the T protein. In Paraburkholderia phymatum (strain DSM 17167 / CIP 108236 / LMG 21445 / STM815) (Burkholderia phymatum), this protein is Glycine cleavage system H protein.